A 208-amino-acid polypeptide reads, in one-letter code: dTTP/UTP pyrophosphatase (208 aa).

Asp79 serves as the catalytic Proton acceptor.

This sequence belongs to the Maf family. YhdE subfamily. It depends on a divalent metal cation as a cofactor.

It is found in the cytoplasm. It catalyses the reaction dTTP + H2O = dTMP + diphosphate + H(+). The catalysed reaction is UTP + H2O = UMP + diphosphate + H(+). Nucleoside triphosphate pyrophosphatase that hydrolyzes dTTP and UTP. May have a dual role in cell division arrest and in preventing the incorporation of modified nucleotides into cellular nucleic acids. The sequence is that of dTTP/UTP pyrophosphatase from Mesorhizobium japonicum (strain LMG 29417 / CECT 9101 / MAFF 303099) (Mesorhizobium loti (strain MAFF 303099)).